The following is a 161-amino-acid chain: 2-C-methyl-D-erythritol 2,4-cyclodiphosphate synthase (161 aa).

2 residues coordinate a divalent metal cation: aspartate 10 and histidine 12. 4-CDP-2-C-methyl-D-erythritol 2-phosphate contacts are provided by residues aspartate 10–histidine 12 and histidine 36–serine 37. An a divalent metal cation-binding site is contributed by histidine 44. Residues aspartate 58–glycine 60, phenylalanine 63–aspartate 67, and arginine 144 each bind 4-CDP-2-C-methyl-D-erythritol 2-phosphate.

Belongs to the IspF family. As to quaternary structure, homotrimer. The cofactor is a divalent metal cation.

The catalysed reaction is 4-CDP-2-C-methyl-D-erythritol 2-phosphate = 2-C-methyl-D-erythritol 2,4-cyclic diphosphate + CMP. Its pathway is isoprenoid biosynthesis; isopentenyl diphosphate biosynthesis via DXP pathway; isopentenyl diphosphate from 1-deoxy-D-xylulose 5-phosphate: step 4/6. Its function is as follows. Involved in the biosynthesis of isopentenyl diphosphate (IPP) and dimethylallyl diphosphate (DMAPP), two major building blocks of isoprenoid compounds. Catalyzes the conversion of 4-diphosphocytidyl-2-C-methyl-D-erythritol 2-phosphate (CDP-ME2P) to 2-C-methyl-D-erythritol 2,4-cyclodiphosphate (ME-CPP) with a corresponding release of cytidine 5-monophosphate (CMP). The chain is 2-C-methyl-D-erythritol 2,4-cyclodiphosphate synthase from Burkholderia lata (strain ATCC 17760 / DSM 23089 / LMG 22485 / NCIMB 9086 / R18194 / 383).